The sequence spans 837 residues: CoA-transferase/lyase DddD (837 aa).

The Nucleophile role is filled by Asp602.

Belongs to the CoA-transferase III family.

Functionally, dimethyl sulfide (DMS)-producing enzyme. Acts both as a transferase and a lyase: uses acetyl-coenzyme A (acetyl-coA) and dimethylsulfoniopropionate (DMSP) as substrates to produce DMS, acetate and 3-hydroxypropionate-CoA (3HP-CoA). Mediates the CoA-transferase prior to lyase activity. DMS is the principal form by which sulfur is transported from oceans to the atmosphere and is a key component of the ocean sulfur cycle. The chain is CoA-transferase/lyase DddD from Marinomonas sp. (strain MWYL1).